A 633-amino-acid chain; its full sequence is DNA topoisomerase 4 subunit B (633 aa).

ATP-binding positions include Tyr5, Asn45, Asp72, 113–119, and Lys337; that span reads GLHGVGA. A Toprim domain is found at 419-534; it reads KELFIVEGDS…LGHVYLALPP (116 aa). Mg(2+) is bound by residues Glu425, Asp499, and Asp501.

The protein belongs to the type II topoisomerase family. ParE type 2 subfamily. As to quaternary structure, heterotetramer composed of ParC and ParE. Mg(2+) is required as a cofactor. It depends on Mn(2+) as a cofactor. The cofactor is Ca(2+).

It catalyses the reaction ATP-dependent breakage, passage and rejoining of double-stranded DNA.. Functionally, topoisomerase IV is essential for chromosome segregation. It relaxes supercoiled DNA. Performs the decatenation events required during the replication of a circular DNA molecule. In Mycoplasma genitalium (strain ATCC 33530 / DSM 19775 / NCTC 10195 / G37) (Mycoplasmoides genitalium), this protein is DNA topoisomerase 4 subunit B.